Here is a 170-residue protein sequence, read N- to C-terminus: Arginine repressor (170 aa).

This sequence belongs to the ArgR family.

It is found in the cytoplasm. Its pathway is amino-acid biosynthesis; L-arginine biosynthesis [regulation]. Functionally, regulates arginine biosynthesis genes. The protein is Arginine repressor of Bifidobacterium longum (strain NCC 2705).